A 200-amino-acid polypeptide reads, in one-letter code: Holliday junction branch migration complex subunit RuvA (200 aa).

Residues 1-64 (MYAYFRGRVV…EDALQLYGFS (64 aa)) form a domain I region. Residues 65 to 143 (SEEEKQLFRL…KLSPPGAAAT (79 aa)) form a domain II region. Positions 144–154 (PAGAVQCGIRE) are flexible linker. The tract at residues 154-200 (EDATNALLTLGFSRTAAQQAVAGVLEANPGGSVEDVVKSALLAMHNR) is domain III.

It belongs to the RuvA family. As to quaternary structure, homotetramer. Forms an RuvA(8)-RuvB(12)-Holliday junction (HJ) complex. HJ DNA is sandwiched between 2 RuvA tetramers; dsDNA enters through RuvA and exits via RuvB. An RuvB hexamer assembles on each DNA strand where it exits the tetramer. Each RuvB hexamer is contacted by two RuvA subunits (via domain III) on 2 adjacent RuvB subunits; this complex drives branch migration. In the full resolvosome a probable DNA-RuvA(4)-RuvB(12)-RuvC(2) complex forms which resolves the HJ.

Its subcellular location is the cytoplasm. The RuvA-RuvB-RuvC complex processes Holliday junction (HJ) DNA during genetic recombination and DNA repair, while the RuvA-RuvB complex plays an important role in the rescue of blocked DNA replication forks via replication fork reversal (RFR). RuvA specifically binds to HJ cruciform DNA, conferring on it an open structure. The RuvB hexamer acts as an ATP-dependent pump, pulling dsDNA into and through the RuvAB complex. HJ branch migration allows RuvC to scan DNA until it finds its consensus sequence, where it cleaves and resolves the cruciform DNA. The sequence is that of Holliday junction branch migration complex subunit RuvA from Chlorobium luteolum (strain DSM 273 / BCRC 81028 / 2530) (Pelodictyon luteolum).